The chain runs to 368 residues: Agmatine deiminase (368 aa).

C357 (amidino-cysteine intermediate) is an active-site residue.

Belongs to the agmatine deiminase family. As to quaternary structure, homodimer.

It carries out the reaction agmatine + H2O = N-carbamoylputrescine + NH4(+). It participates in amine and polyamine biosynthesis; putrescine biosynthesis via agmatine pathway; N-carbamoylputrescine from agmatine: step 1/1. Its function is as follows. Mediates the hydrolysis of agmatine into N-carbamoylputrescine in the arginine decarboxylase (ADC) pathway of putrescine biosynthesis, a basic polyamine. This chain is Agmatine deiminase, found in Pseudomonas fluorescens (strain ATCC BAA-477 / NRRL B-23932 / Pf-5).